The primary structure comprises 351 residues: Snurportin-1 (351 aa).

Disordered regions lie at residues 1 to 66 (MESS…QKGI) and 294 to 322 (EQKK…EYDS). Residues 8 to 42 (LYKKGLDIGEQQKQRQKELLKQQKLRRQQEQDDYR) show a composition bias toward basic and acidic residues. Over residues 52–62 (PRKKSGKRSGH) the composition is skewed to basic residues. A coiled-coil region spans residues 274–330 (VLQYMDAFEQKLAEHRRTLKEQKKKVNEQKEDPHTMEAEEDVESDEYDSLKRVLDQQ). Basic and acidic residues predominate over residues 294–310 (EQKKKVNEQKEDPHTME). Residues 311–320 (AEEDVESDEY) are compositionally biased toward acidic residues.

The protein belongs to the snurportin family. Interacts with components of the snRNP complex including SmB and Smn; these interactions are RNA-dependent. Interacts with importin-7 msk but not with importin subunit beta Fs(2)Ket; the interaction is RNA-dependent.

The protein resides in the nucleus. Its subcellular location is the cytoplasm. The protein localises to the U-body. It is found in the nucleus speckle. It localises to the cajal body. Its function is as follows. Functions as an U snRNP-specific nuclear import adapter. Involved in the trimethylguanosine (m3G)-cap-dependent nuclear import of U snRNPs. Binds specifically to the terminal m3G-cap U snRNAs. The protein is Snurportin-1 of Drosophila melanogaster (Fruit fly).